Reading from the N-terminus, the 128-residue chain is Centrosomal protein 15 (128 aa).

The protein resides in the cell projection. It is found in the cilium. Functionally, may play a role in ciliary assembly. This Bos taurus (Bovine) protein is Centrosomal protein 15 (CEP15).